Consider the following 220-residue polypeptide: Probable septum site-determining protein MinC (220 aa).

It belongs to the MinC family. As to quaternary structure, interacts with MinD and FtsZ.

Functionally, cell division inhibitor that blocks the formation of polar Z ring septums. Rapidly oscillates between the poles of the cell to destabilize FtsZ filaments that have formed before they mature into polar Z rings. Prevents FtsZ polymerization. The chain is Probable septum site-determining protein MinC from Vibrio atlanticus (strain LGP32) (Vibrio splendidus (strain Mel32)).